A 155-amino-acid polypeptide reads, in one-letter code: Small ribosomal subunit protein uS7c (155 aa).

The protein belongs to the universal ribosomal protein uS7 family. In terms of assembly, part of the 30S ribosomal subunit.

It localises to the plastid. Its subcellular location is the chloroplast. In terms of biological role, one of the primary rRNA binding proteins, it binds directly to 16S rRNA where it nucleates assembly of the head domain of the 30S subunit. The chain is Small ribosomal subunit protein uS7c (rps7) from Lactoris fernandeziana.